Consider the following 665-residue polypeptide: BTB/POZ domain-containing protein At1g30440 (665 aa).

The region spanning 28–98 is the BTB domain; it reads SDIVVEVGEM…CYGVKLELTA (71 aa). Residues 214–508 enclose the NPH3 domain; the sequence is DWWYEDASML…VQVLFFEQLQ (295 aa). Residues 260–280 are disordered; that stretch reads LKRRRGGPESSGRFSTPLGSG. Polar residues predominate over residues 271–280; the sequence is GRFSTPLGSG. Serine 279 bears the Phosphoserine mark. The stretch at 281-306 forms a coiled coil; that stretch reads NVLSEEEQKNLLEEIQELLRMQKGLV. Tyrosine 449 bears the Phosphotyrosine mark. The span at 626-639 shows a compositional bias: polar residues; sequence SAQEGSVSKSNNEN. The disordered stretch occupies residues 626–665; the sequence is SAQEGSVSKSNNENVKIEKLKDVKERRGKHKKASSISSER. Positions 640 to 650 are enriched in basic and acidic residues; the sequence is VKIEKLKDVKE.

Belongs to the NPH3 family.

It functions in the pathway protein modification; protein ubiquitination. Its function is as follows. May act as a substrate-specific adapter of an E3 ubiquitin-protein ligase complex (CUL3-RBX1-BTB) which mediates the ubiquitination and subsequent proteasomal degradation of target proteins. This is BTB/POZ domain-containing protein At1g30440 from Arabidopsis thaliana (Mouse-ear cress).